The chain runs to 350 residues: 3-isopropylmalate dehydrogenase (350 aa).

71-84 (GPKWADAPRHLRPE) serves as a coordination point for NAD(+). Positions 91, 101, 129, and 220 each coordinate substrate. 3 residues coordinate Mg(2+): Asp220, Asp244, and Asp248. 279–291 (GSAPDIAGKGLAN) serves as a coordination point for NAD(+).

It belongs to the isocitrate and isopropylmalate dehydrogenases family. LeuB type 1 subfamily. Homodimer. It depends on Mg(2+) as a cofactor. Requires Mn(2+) as cofactor.

The protein localises to the cytoplasm. It carries out the reaction (2R,3S)-3-isopropylmalate + NAD(+) = 4-methyl-2-oxopentanoate + CO2 + NADH. Its pathway is amino-acid biosynthesis; L-leucine biosynthesis; L-leucine from 3-methyl-2-oxobutanoate: step 3/4. Catalyzes the oxidation of 3-carboxy-2-hydroxy-4-methylpentanoate (3-isopropylmalate) to 3-carboxy-4-methyl-2-oxopentanoate. The product decarboxylates to 4-methyl-2 oxopentanoate. The protein is 3-isopropylmalate dehydrogenase of Caulobacter vibrioides (strain ATCC 19089 / CIP 103742 / CB 15) (Caulobacter crescentus).